A 425-amino-acid polypeptide reads, in one-letter code: Glutamyl-tRNA(Gln) amidotransferase subunit A (425 aa).

Catalysis depends on charge relay system residues lysine 29 and serine 104. Serine 128 acts as the Acyl-ester intermediate in catalysis.

The protein belongs to the amidase family. GatA subfamily. In terms of assembly, heterotrimer of A, B and C subunits.

The enzyme catalyses L-glutamyl-tRNA(Gln) + L-glutamine + ATP + H2O = L-glutaminyl-tRNA(Gln) + L-glutamate + ADP + phosphate + H(+). Its function is as follows. Allows the formation of correctly charged Gln-tRNA(Gln) through the transamidation of misacylated Glu-tRNA(Gln) in organisms which lack glutaminyl-tRNA synthetase. The reaction takes place in the presence of glutamine and ATP through an activated gamma-phospho-Glu-tRNA(Gln). This chain is Glutamyl-tRNA(Gln) amidotransferase subunit A, found in Haloarcula marismortui (strain ATCC 43049 / DSM 3752 / JCM 8966 / VKM B-1809) (Halobacterium marismortui).